We begin with the raw amino-acid sequence, 393 residues long: DNA-directed RNA polymerase subunit Rpo1C (393 aa).

It belongs to the RNA polymerase beta' chain family. In terms of assembly, part of the 13-subunit RNA polymerase complex. Interacts with TFS4.

It is found in the cytoplasm. The enzyme catalyses RNA(n) + a ribonucleoside 5'-triphosphate = RNA(n+1) + diphosphate. Its function is as follows. DNA-dependent RNA polymerase (RNAP) catalyzes the transcription of DNA into RNA using the four ribonucleoside triphosphates as substrates. Forms part of the jaw domain. Functionally, reconstitution experiments show this subunit is required for basic activity. In Sulfolobus acidocaldarius (strain ATCC 33909 / DSM 639 / JCM 8929 / NBRC 15157 / NCIMB 11770), this protein is DNA-directed RNA polymerase subunit Rpo1C.